The primary structure comprises 590 residues: L-fucose isomerase (590 aa).

Active-site proton acceptor residues include Glu-337 and Asp-361. The Mn(2+) site is built by Glu-337, Asp-361, and His-528.

The protein belongs to the L-fucose isomerase family. Mn(2+) is required as a cofactor.

The protein resides in the cytoplasm. The enzyme catalyses L-fucose = L-fuculose. It participates in carbohydrate degradation; L-fucose degradation; L-lactaldehyde and glycerone phosphate from L-fucose: step 1/3. In terms of biological role, converts the aldose L-fucose into the corresponding ketose L-fuculose. The chain is L-fucose isomerase from Bacteroides fragilis (strain ATCC 25285 / DSM 2151 / CCUG 4856 / JCM 11019 / LMG 10263 / NCTC 9343 / Onslow / VPI 2553 / EN-2).